We begin with the raw amino-acid sequence, 800 residues long: DNA topoisomerase 4 subunit A (800 aa).

The Topo IIA-type catalytic domain occupies 31 to 495 (LPDVRDGLKP…EIEEIKIDKE (465 aa)). The active-site O-(5'-phospho-DNA)-tyrosine intermediate is Tyr-119.

Belongs to the type II topoisomerase GyrA/ParC subunit family. ParC type 2 subfamily. As to quaternary structure, heterotetramer composed of ParC and ParE.

The protein resides in the cell membrane. The enzyme catalyses ATP-dependent breakage, passage and rejoining of double-stranded DNA.. Topoisomerase IV is essential for chromosome segregation. It relaxes supercoiled DNA. Performs the decatenation events required during the replication of a circular DNA molecule. This is DNA topoisomerase 4 subunit A from Staphylococcus aureus (strain MSSA476).